The sequence spans 743 residues: UV-stimulated scaffold protein A (743 aa).

The tract at residues 2–145 (DQKLSELVEV…HFLKQNKKID (144 aa)) is VHS-like. Residues 147–199 (QDVRSRTQAERKREEEKQRRLENIYKEKVKKATAEMEDMLEEIQSSLTEMENC) adopt a coiled-coil conformation. Residues 221 to 310 (SDMRTKPTSQ…DDSDGDYEGS (90 aa)) form a disordered region. Low complexity predominate over residues 226–252 (KPTSQSPSHSKSTSQSSAYSKSTSQVS). Over residues 283–300 (SLGEGAKESDKSARKSDT) the composition is skewed to basic and acidic residues. The stretch at 380–411 (ESLKCAIDVKKEIEAALKKYKEMNIDCHTKER) forms a coiled coil. Disordered regions lie at residues 413-482 (VMTA…NDEL) and 500-525 (KALP…DLSQ). Residues 417–428 (SDDDDDDDEFEE) show a composition bias toward acidic residues. 2 stretches are compositionally biased toward basic and acidic residues: residues 429 to 447 (VPEK…REEY) and 510 to 522 (GEPK…RETD). Lysine 432 is covalently cross-linked (Glycyl lysine isopeptide (Lys-Gly) (interchain with G-Cter in ubiquitin)). The UVSSA-type zinc-finger motif lies at 591–618 (KHKCLAPMPNGSLCERQDRYKCPFHGKI). Zn(2+)-binding residues include cysteine 594, cysteine 604, cysteine 612, and histidine 615.

The protein belongs to the UVSSA family. Post-translationally, monoubiquitinated at Lys-432 in response to transcription stress; this promotes efficient transfer of TFIIH to stalled RNA polymerase II.

It localises to the chromosome. Its function is as follows. Factor involved in transcription-coupled nucleotide excision repair (TC-NER), a mechanism that rapidly removes RNA polymerase II-blocking lesions from the transcribed strand of active genes. Acts as a key adapter that promotes recruitment of factors involved in TC-NER. Facilitates the ubiquitination of the elongating form of RNA polymerase II (RNA pol IIo) at DNA damage sites, thereby promoting RNA pol IIo backtracking and access by the TC-NER machinery to lesion sites. Also promotes stabilization of ERCC6/CSB by recruiting deubiquitinating enzyme USP7 to TC-NER complexes, preventing UV-induced degradation of ERCC6 by the proteasome. Mediates the recruitment of the TFIIH complex and other factors that are required for nucleotide excision repair to RNA polymerase II. Also required to inactivate stalled RNA polymerase II by blocking the access of TCEA1/TFIIS, thereby preventing reactivation of RNA polymerase II. This is UV-stimulated scaffold protein A (uvssa) from Xenopus tropicalis (Western clawed frog).